Reading from the N-terminus, the 165-residue chain is MNLSKTGLPFLWISAVAFFTDLITKLAVVKNFSLYESVNILPFFNLTYVRNHGAAFSFLADHAGWQKYFFILLALAVSFMILFFLYKNQATQKLQNTGYALMIGGALANAADRAYHGFVVDFFDFYWQQWHYPVFNVADIAICIGAGLLAIDAFKQNDKKESKQN.

Transmembrane regions (helical) follow at residues 9–29 (PFLWISAVAFFTDLITKLAVV), 65–85 (WQKYFFILLALAVSFMILFFL), and 97–119 (TGYALMIGGALANAADRAYHGFV). Residues Asp121 and Asp139 contribute to the active site. A helical transmembrane segment spans residues 134 to 154 (VFNVADIAICIGAGLLAIDAF).

The protein belongs to the peptidase A8 family.

It is found in the cell inner membrane. It carries out the reaction Release of signal peptides from bacterial membrane prolipoproteins. Hydrolyzes -Xaa-Yaa-Zaa-|-(S,diacylglyceryl)Cys-, in which Xaa is hydrophobic (preferably Leu), and Yaa (Ala or Ser) and Zaa (Gly or Ala) have small, neutral side chains.. Its pathway is protein modification; lipoprotein biosynthesis (signal peptide cleavage). In terms of biological role, this protein specifically catalyzes the removal of signal peptides from prolipoproteins. This Histophilus somni (strain 2336) (Haemophilus somnus) protein is Lipoprotein signal peptidase.